A 455-amino-acid chain; its full sequence is MEENFEPYTPQLLKNPLSYSDLVKKGVEFEVDNSQQNHARDLGLDSDSDSDYEDALDVDGEELRSPWTYSFDELRALMSEIDENIYKRITRTGHVDREAVPNKARVSVRYSGYWEGETAPFDSSLLRGSKFVFETGQGTVVEGLEVAVRSMRPYEQAEFIISYKLLFGELGCPPRIKPKADALFKVEVIDYSLIGDAKGIDAIPQEDRDKFCVVYPKAVDLHLHGKDSVKLGRYQSAATAFERAVSSLNYCRMANDEEERKQTELLTTLNQNLMIVYNKMNKPKRACIMMKALRHLTMGNPSCKALFQEGRALAALGEYNLARNAYLQAQAKQPANKEISDEIISMNKRISKYEEASRDIWARAFSLKNSKSDVRKTPAQLEKEAKEQDFNDKMEDLIRRFKNTSDQQVSFSRKSYSNAQFDATCKLAKEHNLKLTLSPIQEDVLTLSKPDVKFA.

A disordered region spans residues 34-54; sequence SQQNHARDLGLDSDSDSDYED. Over residues 44-54 the composition is skewed to acidic residues; that stretch reads LDSDSDSDYED. One can recognise a PPIase FKBP-type domain in the interval 103 to 192; sequence KARVSVRYSG…LFKVEVIDYS (90 aa). 2 TPR repeats span residues 218–251 and 303–336; these read AVDL…LNYC and CKAL…QPAN.

Belongs to the FKBP6 family. Interacts with Hsp83. As to expression, strongly expressed in the germline stem cells and in 16-cell cysts. Present in the germ cells throughout embryogenesis. Defects are due to derepression of transposable elements and impaired piRNA biogenesis.

It is found in the cytoplasm. Its subcellular location is the cytoplasmic ribonucleoprotein granule. In terms of biological role, co-chaperone required during oogenesis to repress transposable elements and prevent their mobilization, which is essential for the germline integrity. Acts via the piRNA metabolic process, which mediates the repression of transposable elements during meiosis by forming complexes composed of piRNAs and Piwi proteins and govern the methylation and subsequent repression of transposons. Acts as a co-chaperone via its interaction with Hsp83/HSP90 and is required for the biogenesis of all three piRNA major populations. This chain is Inactive peptidyl-prolyl cis-trans isomerase shutdown, found in Drosophila melanogaster (Fruit fly).